The chain runs to 293 residues: Ribosomal protein L11 methyltransferase (293 aa).

Thr-145, Gly-166, Asp-188, and Asn-230 together coordinate S-adenosyl-L-methionine.

Belongs to the methyltransferase superfamily. PrmA family.

Its subcellular location is the cytoplasm. The catalysed reaction is L-lysyl-[protein] + 3 S-adenosyl-L-methionine = N(6),N(6),N(6)-trimethyl-L-lysyl-[protein] + 3 S-adenosyl-L-homocysteine + 3 H(+). Its function is as follows. Methylates ribosomal protein L11. The protein is Ribosomal protein L11 methyltransferase of Salmonella heidelberg (strain SL476).